Reading from the N-terminus, the 306-residue chain is High osmolarity signaling protein MOS1 (306 aa).

Residues 1–23 (MEHSRPYGGRKRMSLGNILGDPF) lie on the Cytoplasmic side of the membrane. A helical transmembrane segment spans residues 24-44 (ALATISISLLAWFITFISCVI). Residues 45–67 (AQVQANKNKGLPDKDNPDGNFPP) lie on the Extracellular side of the membrane. Residues 68-88 (FAWWAVVYSLFLIVGVVIVVA) form a helical membrane-spanning segment. Topologically, residues 89–96 (SDAIQTYH) are cytoplasmic. Residues 97-117 (VAVTGYLAGGMVLVTSGVNSL) form a helical membrane-spanning segment. Residues 118-126 (VYSKNGARE) are Extracellular-facing. Residues 127–147 (AAAAGFILLSMVVIVWIFYFG) form a helical membrane-spanning segment. Topologically, residues 148 to 306 (STPSSTPRAF…IAPSNYLILL (159 aa)) are cytoplasmic. The disordered stretch occupies residues 204 to 242 (FENPSPVGGASQAPTAPTMPTYGNNTMQPNNKSNDEEVL). Over residues 224–235 (TYGNNTMQPNNK) the composition is skewed to polar residues. Residues 246–306 (DYPYQAKAIY…IAPSNYLILL (61 aa)) enclose the SH3 domain.

This sequence belongs to the SHO1 family. Forms homooligomers.

Its subcellular location is the cell membrane. Plasma membrane osmosensor that activates the high osmolarity glycerol (HOG) MAPK signaling pathway in response to high osmolarity. Affects fungal virulence. The polypeptide is High osmolarity signaling protein MOS1 (MOS1) (Metarhizium robertsii (strain ARSEF 23 / ATCC MYA-3075) (Metarhizium anisopliae (strain ARSEF 23))).